The chain runs to 292 residues: Mitochondrial fission regulator 1-like (292 aa).

Residue threonine 30 is modified to Phosphothreonine. Serine 41 is subject to Phosphoserine. Serine 103 carries the phosphoserine; by AMPK modification. Phosphoserine is present on residues serine 110, serine 224, and serine 225. At serine 238 the chain carries Phosphoserine; by AMPK. Phosphoserine is present on residues serine 261 and serine 273.

It belongs to the MTFR1 family. In terms of processing, phosphorylated by AMPK. Upon stress, phosphorylation at Ser-103 and Ser-238 by AMPK is sufficient to induce mitochondrial fragmentation.

It localises to the mitochondrion outer membrane. Mitochondrial protein required for adaptation of miochondrial dynamics to metabolic changes. Regulates mitochondrial morphology at steady state and mediates AMPK-dependent stress-induced mitochondrial fragmentation via the control of OPA1 levels. In Homo sapiens (Human), this protein is Mitochondrial fission regulator 1-like.